An 82-amino-acid polypeptide reads, in one-letter code: RNA-binding protein Hfq (82 aa).

Residues 10-70 (DTFLNHVRKN…ISTIMPAQPV (61 aa)) enclose the Sm domain.

The protein belongs to the Hfq family. As to quaternary structure, homohexamer.

In terms of biological role, RNA chaperone that binds small regulatory RNA (sRNAs) and mRNAs to facilitate mRNA translational regulation in response to envelope stress, environmental stress and changes in metabolite concentrations. Also binds with high specificity to tRNAs. This Parvibaculum lavamentivorans (strain DS-1 / DSM 13023 / NCIMB 13966) protein is RNA-binding protein Hfq.